The sequence spans 473 residues: Maltose fermentation regulatory protein MAL13 (473 aa).

Positions 13–39 (CDCCRIRRVKCDGKRPCSSCLQNSLDC) form a DNA-binding region, zn(2)-C6 fungal-type. Positions 46–54 (RKRGPKSIR) match the Nuclear localization signal motif.

Belongs to the MAL13 family.

Its subcellular location is the nucleus. Functionally, regulates the coordinate transcription of structural MAL1S (maltase) and AGT1 (maltose permease) genes. The protein is Maltose fermentation regulatory protein MAL13 (MAL13) of Saccharomyces cerevisiae (strain ATCC 204508 / S288c) (Baker's yeast).